A 398-amino-acid polypeptide reads, in one-letter code: 8-amino-7-oxononanoate synthase (398 aa).

R23 is a binding site for substrate. 110-111 (GY) provides a ligand contact to pyridoxal 5'-phosphate. Residue H135 participates in substrate binding. Residues S181, H209, and T237 each contribute to the pyridoxal 5'-phosphate site. K240 is modified (N6-(pyridoxal phosphate)lysine). T354 contributes to the substrate binding site.

The protein belongs to the class-II pyridoxal-phosphate-dependent aminotransferase family. BioF subfamily. As to quaternary structure, homodimer. Requires pyridoxal 5'-phosphate as cofactor.

The enzyme catalyses 6-carboxyhexanoyl-[ACP] + L-alanine + H(+) = (8S)-8-amino-7-oxononanoate + holo-[ACP] + CO2. It functions in the pathway cofactor biosynthesis; biotin biosynthesis. Its function is as follows. Catalyzes the decarboxylative condensation of pimeloyl-[acyl-carrier protein] and L-alanine to produce 8-amino-7-oxononanoate (AON), [acyl-carrier protein], and carbon dioxide. The chain is 8-amino-7-oxononanoate synthase from Anaeromyxobacter sp. (strain K).